We begin with the raw amino-acid sequence, 409 residues long: Serine hydroxymethyltransferase (409 aa).

(6S)-5,6,7,8-tetrahydrofolate is bound by residues Leu-116 and 120–122 (GHL). At Lys-225 the chain carries N6-(pyridoxal phosphate)lysine.

Belongs to the SHMT family. In terms of assembly, homodimer. It depends on pyridoxal 5'-phosphate as a cofactor.

It is found in the cytoplasm. The catalysed reaction is (6R)-5,10-methylene-5,6,7,8-tetrahydrofolate + glycine + H2O = (6S)-5,6,7,8-tetrahydrofolate + L-serine. It functions in the pathway one-carbon metabolism; tetrahydrofolate interconversion. It participates in amino-acid biosynthesis; glycine biosynthesis; glycine from L-serine: step 1/1. Functionally, catalyzes the reversible interconversion of serine and glycine with tetrahydrofolate (THF) serving as the one-carbon carrier. This reaction serves as the major source of one-carbon groups required for the biosynthesis of purines, thymidylate, methionine, and other important biomolecules. Also exhibits THF-independent aldolase activity toward beta-hydroxyamino acids, producing glycine and aldehydes, via a retro-aldol mechanism. This chain is Serine hydroxymethyltransferase, found in Acholeplasma laidlawii (strain PG-8A).